A 1040-amino-acid polypeptide reads, in one-letter code: Multidrug resistance protein MdtB (1040 aa).

A run of 12 helical transmembrane segments spans residues Phe-16–Ile-36, Leu-347–Ala-367, Ile-369–Leu-389, Leu-396–Ile-416, Ile-440–Phe-460, Phe-472–Pro-492, Trp-537–Ile-557, Leu-863–Ile-883, Phe-888–Ala-908, Ile-911–Val-931, Ile-968–Val-988, and Ile-998–Ile-1018.

It belongs to the resistance-nodulation-cell division (RND) (TC 2.A.6) family. MdtB subfamily. In terms of assembly, part of a tripartite efflux system composed of MdtA, MdtB and MdtC. MdtB forms a heteromultimer with MdtC.

It is found in the cell inner membrane. The chain is Multidrug resistance protein MdtB from Shigella boydii serotype 18 (strain CDC 3083-94 / BS512).